The sequence spans 399 residues: Acetate kinase (399 aa).

Asn-7 contributes to the Mg(2+) binding site. Lys-14 is an ATP binding site. Arg-90 serves as a coordination point for substrate. Asp-147 acts as the Proton donor/acceptor in catalysis. Residues 207-211 (HLGNG), 282-284 (DFR), and 330-334 (GIGEN) each bind ATP. Glu-385 provides a ligand contact to Mg(2+).

Belongs to the acetokinase family. As to quaternary structure, homodimer. Mg(2+) serves as cofactor. Requires Mn(2+) as cofactor.

The protein resides in the cytoplasm. The enzyme catalyses acetate + ATP = acetyl phosphate + ADP. It functions in the pathway metabolic intermediate biosynthesis; acetyl-CoA biosynthesis; acetyl-CoA from acetate: step 1/2. Catalyzes the formation of acetyl phosphate from acetate and ATP. Can also catalyze the reverse reaction. The protein is Acetate kinase of Caldicellulosiruptor bescii (strain ATCC BAA-1888 / DSM 6725 / KCTC 15123 / Z-1320) (Anaerocellum thermophilum).